A 508-amino-acid chain; its full sequence is U4/U6 small nuclear ribonucleoprotein Prp31 (508 aa).

Residues 1–45 are disordered; it reads MSLADELLADLEEAGEEDGLYPGGEEGESDGEPGERQVDGGLEDI. A compositionally biased stretch (acidic residues) spans 7–32; that stretch reads LLADLEEAGEEDGLYPGGEEGESDGE. Coiled-coil stretches lie at residues 96–131 and 192–226; these read EADPEYRLIVAANNLTVEIDNELNIIHKFVRDKYSK and DDELQRLEEACDMALELNQSKHRIYEYVESRMSFI. The 119-residue stretch at 226 to 344 folds into the Nop domain; that stretch reads IAPNLSIIVG…IERKFDKWQE (119 aa). Disordered stretches follow at residues 345–368 and 442–461; these read PPPVKQVKPLPAPLDGQRKKRGGR and QSMTYGGKSTVRDRSSGTSS. The short motif at 362-375 is the Nuclear localization signal (NLS) element; that stretch reads RKKRGGRRYRKMKE.

Belongs to the PRP31 family. In terms of assembly, identified in the spliceosome B complex. Component of the U4/U6-U5 tri-snRNP complex. Component of some MLL1/MLL complex.

The protein resides in the nucleus. It is found in the nucleus speckle. The protein localises to the cajal body. Functionally, involved in pre-mRNA splicing as component of the spliceosome. Required for the assembly of the U4/U5/U6 tri-snRNP complex, one of the building blocks of the spliceosome. This chain is U4/U6 small nuclear ribonucleoprotein Prp31 (prpf31), found in Danio rerio (Zebrafish).